A 232-amino-acid chain; its full sequence is Large ribosomal subunit protein uL1 (232 aa).

The protein belongs to the universal ribosomal protein uL1 family. As to quaternary structure, part of the 50S ribosomal subunit.

Its function is as follows. Binds directly to 23S rRNA. The L1 stalk is quite mobile in the ribosome, and is involved in E site tRNA release. Functionally, protein L1 is also a translational repressor protein, it controls the translation of the L11 operon by binding to its mRNA. The sequence is that of Large ribosomal subunit protein uL1 from Colwellia psychrerythraea (strain 34H / ATCC BAA-681) (Vibrio psychroerythus).